A 91-amino-acid chain; its full sequence is Small ribosomal subunit protein bS20 (91 aa).

This sequence belongs to the bacterial ribosomal protein bS20 family.

Binds directly to 16S ribosomal RNA. The polypeptide is Small ribosomal subunit protein bS20 (Caulobacter vibrioides (strain ATCC 19089 / CIP 103742 / CB 15) (Caulobacter crescentus)).